A 652-amino-acid chain; its full sequence is ATP-dependent zinc metalloprotease FtsH 2 (652 aa).

Topologically, residues 1 to 6 (MNKYRR) are cytoplasmic. Residues 7-27 (GLALGALALAVFILIGVGISM) traverse the membrane as a helical segment. The Extracellular segment spans residues 28–108 (RATPQPVNLT…PAGNGAISAD (81 aa)). Residues 109–129 (LMLLLRILTIVAVGVVIFVLF) traverse the membrane as a helical segment. The Cytoplasmic portion of the chain corresponds to 130-652 (RRFGPSSIGT…RAAKPQIDRT (523 aa)). Residue 200 to 207 (GPPGTGKT) participates in ATP binding. H420 provides a ligand contact to Zn(2+). E421 is an active-site residue. Zn(2+)-binding residues include H424 and D496.

In the central section; belongs to the AAA ATPase family. This sequence in the C-terminal section; belongs to the peptidase M41 family. In terms of assembly, homohexamer. Zn(2+) is required as a cofactor.

It is found in the cell membrane. Its function is as follows. Acts as a processive, ATP-dependent zinc metallopeptidase for both cytoplasmic and membrane proteins. Plays a role in the quality control of integral membrane proteins. This chain is ATP-dependent zinc metalloprotease FtsH 2, found in Sphaerobacter thermophilus (strain ATCC 49802 / DSM 20745 / KCCM 41009 / NCIMB 13125 / S 6022).